Here is a 284-residue protein sequence, read N- to C-terminus: Shikimate dehydrogenase (NADP(+)) (284 aa).

Residues 20-22 and Ser67 each bind shikimate; that span reads SIS. Lys71 functions as the Proton acceptor in the catalytic mechanism. Asp83 provides a ligand contact to NADP(+). Asn92 and Asp107 together coordinate shikimate. NADP(+) contacts are provided by residues 129-133 and Ile227; that span reads GAGGA. Tyr229 contacts shikimate. Gly250 contributes to the NADP(+) binding site.

This sequence belongs to the shikimate dehydrogenase family. Homodimer.

It catalyses the reaction shikimate + NADP(+) = 3-dehydroshikimate + NADPH + H(+). It functions in the pathway metabolic intermediate biosynthesis; chorismate biosynthesis; chorismate from D-erythrose 4-phosphate and phosphoenolpyruvate: step 4/7. Its function is as follows. Involved in the biosynthesis of the chorismate, which leads to the biosynthesis of aromatic amino acids. Catalyzes the reversible NADPH linked reduction of 3-dehydroshikimate (DHSA) to yield shikimate (SA). This is Shikimate dehydrogenase (NADP(+)) from Streptococcus pneumoniae (strain ATCC 700669 / Spain 23F-1).